We begin with the raw amino-acid sequence, 426 residues long: Histidine--tRNA ligase (426 aa).

The protein belongs to the class-II aminoacyl-tRNA synthetase family. In terms of assembly, homodimer.

The protein localises to the cytoplasm. The enzyme catalyses tRNA(His) + L-histidine + ATP = L-histidyl-tRNA(His) + AMP + diphosphate + H(+). The chain is Histidine--tRNA ligase from Streptococcus pyogenes serotype M6 (strain ATCC BAA-946 / MGAS10394).